Here is a 254-residue protein sequence, read N- to C-terminus: Leucyl/phenylalanyl-tRNA--protein transferase (254 aa).

This sequence belongs to the L/F-transferase family.

It localises to the cytoplasm. It catalyses the reaction N-terminal L-lysyl-[protein] + L-leucyl-tRNA(Leu) = N-terminal L-leucyl-L-lysyl-[protein] + tRNA(Leu) + H(+). The enzyme catalyses N-terminal L-arginyl-[protein] + L-leucyl-tRNA(Leu) = N-terminal L-leucyl-L-arginyl-[protein] + tRNA(Leu) + H(+). The catalysed reaction is L-phenylalanyl-tRNA(Phe) + an N-terminal L-alpha-aminoacyl-[protein] = an N-terminal L-phenylalanyl-L-alpha-aminoacyl-[protein] + tRNA(Phe). Functions in the N-end rule pathway of protein degradation where it conjugates Leu, Phe and, less efficiently, Met from aminoacyl-tRNAs to the N-termini of proteins containing an N-terminal arginine or lysine. This is Leucyl/phenylalanyl-tRNA--protein transferase from Burkholderia cenocepacia (strain HI2424).